A 250-amino-acid chain; its full sequence is MANIHIVIPARLKSTRLPNKMLADIAGKPMIQRVYEQVTKSKFDSIIIATDSQKIKDIAESFGAKVVLTRDDHQSGTDRIAEAVTKLGFADEDIVVNVQGDEPLIPIENIEQAAQLLIDKSEAVVSTLCEKITDVEDIYNPNNVKVVFDKNNYALYFSRASIPFERGFSEKEQINISEFFRHIGIYAYRVAFLKHYAELTVSPIEKYEALEQLRVLYNGYKIAIEQSAKSTPAGVDTLQDLEKVRKLFNV.

The protein belongs to the KdsB family.

The protein resides in the cytoplasm. It catalyses the reaction 3-deoxy-alpha-D-manno-oct-2-ulosonate + CTP = CMP-3-deoxy-beta-D-manno-octulosonate + diphosphate. It participates in nucleotide-sugar biosynthesis; CMP-3-deoxy-D-manno-octulosonate biosynthesis; CMP-3-deoxy-D-manno-octulosonate from 3-deoxy-D-manno-octulosonate and CTP: step 1/1. It functions in the pathway bacterial outer membrane biogenesis; lipopolysaccharide biosynthesis. Its function is as follows. Activates KDO (a required 8-carbon sugar) for incorporation into bacterial lipopolysaccharide in Gram-negative bacteria. The sequence is that of 3-deoxy-manno-octulosonate cytidylyltransferase from Francisella tularensis subsp. holarctica (strain FTNF002-00 / FTA).